A 388-amino-acid chain; its full sequence is Mannitol-1-phosphate 5-dehydrogenase (388 aa).

5-16 lines the NAD(+) pocket; it reads AIQFGGGNIGRG. K213 is a catalytic residue.

The protein belongs to the mannitol dehydrogenase family. Monomer.

It carries out the reaction D-mannitol 1-phosphate + NAD(+) = beta-D-fructose 6-phosphate + NADH + H(+). Its function is as follows. Catalyzes the NAD(H)-dependent interconversion of D-fructose 6-phosphate and D-mannitol 1-phosphate in the mannitol metabolic pathway. The polypeptide is Mannitol-1-phosphate 5-dehydrogenase (mpdA) (Aspergillus terreus (strain NIH 2624 / FGSC A1156)).